The sequence spans 333 residues: Auxiliary capsid protein (333 aa).

Residues 75–237 (HKLVRYSVTL…ATVVTPTKTV (163 aa)) form an FD region.

In terms of assembly, interacts (via FD region) with the major capsid protein.

The protein localises to the virion. Functionally, auxiliary capsid protein that forms an outer layer on the major capsid protein protrusions. In Bacteroides phage crAss001 (Bacteroides phage PhiCrAss001), this protein is Auxiliary capsid protein.